The primary structure comprises 331 residues: Ribosomal RNA small subunit methyltransferase H (331 aa).

Residues 48 to 50 (GGH), D67, D115, and Q122 contribute to the S-adenosyl-L-methionine site. Residues 297-331 (RGTEKPTEEEISENRRASSAKVRAVEKIRTSRTTA) are disordered. Basic and acidic residues predominate over residues 298-312 (GTEKPTEEEISENRR).

The protein belongs to the methyltransferase superfamily. RsmH family.

It is found in the cytoplasm. It catalyses the reaction cytidine(1402) in 16S rRNA + S-adenosyl-L-methionine = N(4)-methylcytidine(1402) in 16S rRNA + S-adenosyl-L-homocysteine + H(+). Specifically methylates the N4 position of cytidine in position 1402 (C1402) of 16S rRNA. This Micrococcus luteus (strain ATCC 4698 / DSM 20030 / JCM 1464 / CCM 169 / CCUG 5858 / IAM 1056 / NBRC 3333 / NCIMB 9278 / NCTC 2665 / VKM Ac-2230) (Micrococcus lysodeikticus) protein is Ribosomal RNA small subunit methyltransferase H.